Here is a 333-residue protein sequence, read N- to C-terminus: N-acetyl-gamma-glutamyl-phosphate reductase (333 aa).

The active site involves cysteine 145.

The protein belongs to the NAGSA dehydrogenase family. Type 1 subfamily.

It localises to the cytoplasm. The catalysed reaction is N-acetyl-L-glutamate 5-semialdehyde + phosphate + NADP(+) = N-acetyl-L-glutamyl 5-phosphate + NADPH + H(+). The protein operates within amino-acid biosynthesis; L-arginine biosynthesis; N(2)-acetyl-L-ornithine from L-glutamate: step 3/4. Its function is as follows. Catalyzes the NADPH-dependent reduction of N-acetyl-5-glutamyl phosphate to yield N-acetyl-L-glutamate 5-semialdehyde. The polypeptide is N-acetyl-gamma-glutamyl-phosphate reductase (Salinispora arenicola (strain CNS-205)).